The following is a 344-amino-acid chain: GTPase Obg (344 aa).

Residues 1–159 enclose the Obg domain; that stretch reads MKFLDLAKVY…RTIWLRLKLI (159 aa). The 167-residue stretch at 160-326 folds into the OBG-type G domain; that stretch reads ADVGLLGLPN…VLRVLRARVD (167 aa). GTP-binding positions include 166–173, 191–195, 212–215, 279–282, and 307–309; these read GLPNAGKS, FTTLV, DIPG, NKID, and SGV. Positions 173 and 193 each coordinate Mg(2+).

Belongs to the TRAFAC class OBG-HflX-like GTPase superfamily. OBG GTPase family. As to quaternary structure, monomer. Mg(2+) is required as a cofactor.

The protein localises to the cytoplasm. Functionally, an essential GTPase which binds GTP, GDP and possibly (p)ppGpp with moderate affinity, with high nucleotide exchange rates and a fairly low GTP hydrolysis rate. Plays a role in control of the cell cycle, stress response, ribosome biogenesis and in those bacteria that undergo differentiation, in morphogenesis control. This chain is GTPase Obg, found in Jannaschia sp. (strain CCS1).